We begin with the raw amino-acid sequence, 113 residues long: Nascent polypeptide-associated complex protein (113 aa).

The region spanning 5–73 (GMNPAKMKQM…AKEVPKSLEI (69 aa)) is the NAC-A/B domain.

This sequence belongs to the NAC-alpha family. In terms of assembly, homodimer. Interacts with the ribosome. Binds ribosomal RNA.

Contacts the emerging nascent chain on the ribosome. In Methanosarcina acetivorans (strain ATCC 35395 / DSM 2834 / JCM 12185 / C2A), this protein is Nascent polypeptide-associated complex protein.